Here is a 103-residue protein sequence, read N- to C-terminus: Large ribosomal subunit protein bL21 (103 aa).

This sequence belongs to the bacterial ribosomal protein bL21 family. In terms of assembly, part of the 50S ribosomal subunit. Contacts protein L20.

Its function is as follows. This protein binds to 23S rRNA in the presence of protein L20. The protein is Large ribosomal subunit protein bL21 of Polaromonas naphthalenivorans (strain CJ2).